We begin with the raw amino-acid sequence, 156 residues long: Nuclear cap-binding protein subunit 2 (156 aa).

N-acetylserine is present on Ser-2. Ser-13 and Ser-18 each carry phosphoserine. Residues Tyr-20, Tyr-43, 112–116, 123–127, and 133–134 contribute to the mRNA site; these read RTDWD, RQYGR, and QV. In terms of domain architecture, RRM spans 40 to 118; that stretch reads CTLYVGNLSF…RIIRTDWDAG (79 aa). Positions 124–156 are disordered; sequence QYGRGRSGGQVRDEYREDYDAGRGGYGKLAQKQ. A compositionally biased stretch (basic and acidic residues) spans 134 to 144; sequence VRDEYREDYDA. Arg-146 carries the post-translational modification Omega-N-methylarginine.

The protein belongs to the RRM NCBP2 family. In terms of assembly, component of the nuclear cap-binding complex (CBC), a heterodimer composed of NCBP1/CBP80 and NCBP2/CBP20 that interacts with m7GpppG-capped RNA. Found in a U snRNA export complex with PHAX/RNUXA, NCBP1/CBP80, NCBP2/CBP20, RAN, XPO1 and m7G-capped RNA. Interacts with PHAX/RNUXA, EIF4G1, HNRNPF, HNRNPH1 and ALYREF/THOC4/ALY. Interacts with SRRT/ARS2 and KPNA3.

Its subcellular location is the nucleus. The protein localises to the cytoplasm. Functionally, component of the cap-binding complex (CBC), which binds co-transcriptionally to the 5' cap of pre-mRNAs and is involved in various processes such as pre-mRNA splicing, translation regulation, nonsense-mediated mRNA decay, RNA-mediated gene silencing (RNAi) by microRNAs (miRNAs) and mRNA export. The CBC complex is involved in mRNA export from the nucleus via its interaction with ALYREF/THOC4/ALY, leading to the recruitment of the mRNA export machinery to the 5' end of mRNA and to mRNA export in a 5' to 3' direction through the nuclear pore. The CBC complex is also involved in mediating U snRNA and intronless mRNAs export from the nucleus. The CBC complex is essential for a pioneer round of mRNA translation, before steady state translation when the CBC complex is replaced by cytoplasmic cap-binding protein eIF4E. The pioneer round of mRNA translation mediated by the CBC complex plays a central role in nonsense-mediated mRNA decay (NMD), NMD only taking place in mRNAs bound to the CBC complex, but not on eIF4E-bound mRNAs. The CBC complex enhances NMD in mRNAs containing at least one exon-junction complex (EJC) via its interaction with UPF1, promoting the interaction between UPF1 and UPF2. The CBC complex is also involved in 'failsafe' NMD, which is independent of the EJC complex, while it does not participate in Staufen-mediated mRNA decay (SMD). During cell proliferation, the CBC complex is also involved in microRNAs (miRNAs) biogenesis via its interaction with SRRT/ARS2, thereby being required for miRNA-mediated RNA interference. The CBC complex also acts as a negative regulator of PARN, thereby acting as an inhibitor of mRNA deadenylation. In the CBC complex, NCBP2/CBP20 recognizes and binds capped RNAs (m7GpppG-capped RNA) but requires NCBP1/CBP80 to stabilize the movement of its N-terminal loop and lock the CBC into a high affinity cap-binding state with the cap structure. The conventional cap-binding complex with NCBP2 binds both small nuclear RNA (snRNA) and messenger (mRNA) and is involved in their export from the nucleus. The protein is Nuclear cap-binding protein subunit 2 (Ncbp2) of Mus musculus (Mouse).